Reading from the N-terminus, the 198-residue chain is Segregation and condensation protein B (198 aa).

It belongs to the ScpB family. In terms of assembly, homodimer. Homodimerization may be required to stabilize the binding of ScpA to the Smc head domains. Component of a cohesin-like complex composed of ScpA, ScpB and the Smc homodimer, in which ScpA and ScpB bind to the head domain of Smc. The presence of the three proteins is required for the association of the complex with DNA.

The protein localises to the cytoplasm. In terms of biological role, participates in chromosomal partition during cell division. May act via the formation of a condensin-like complex containing Smc and ScpA that pull DNA away from mid-cell into both cell halves. The polypeptide is Segregation and condensation protein B (Streptococcus mutans serotype c (strain ATCC 700610 / UA159)).